A 505-amino-acid chain; its full sequence is Cobyric acid synthase (505 aa).

In terms of domain architecture, GATase cobBQ-type spans 251–444; it reads DIDVAVIKLP…IHGIFDNSEF (194 aa). Cysteine 332 acts as the Nucleophile in catalysis. Histidine 436 is a catalytic residue.

The protein belongs to the CobB/CobQ family. CobQ subfamily.

It participates in cofactor biosynthesis; adenosylcobalamin biosynthesis. In terms of biological role, catalyzes amidations at positions B, D, E, and G on adenosylcobyrinic A,C-diamide. NH(2) groups are provided by glutamine, and one molecule of ATP is hydrogenolyzed for each amidation. In Clostridium novyi (strain NT), this protein is Cobyric acid synthase.